The sequence spans 458 residues: Monomethylamine methyltransferase MtmB2 (458 aa).

Residue Pyl-202 is a non-standard amino acid, pyrrolysine.

Belongs to the monomethylamine methyltransferase family. As to quaternary structure, can form a complex with MtmC (MtmC1 or MtmC2).

The catalysed reaction is Co(I)-[methylamine-specific corrinoid protein] + methylamine + H(+) = methyl-Co(III)-[methylamine-specific corrinoid protein] + NH4(+). The protein operates within one-carbon metabolism; methanogenesis from methylamine. Its function is as follows. Catalyzes the transfer of the methyl group from monomethylamine to the corrinoid cofactor of MtmC (MtmC1 or MtmC2). The polypeptide is Monomethylamine methyltransferase MtmB2 (mtmB2) (Methanosarcina barkeri).